Consider the following 715-residue polypeptide: DNA-directed RNA polymerase subunit beta' (715 aa).

4 residues coordinate Zn(2+): Cys69, Cys71, Cys87, and Cys90. The segment at 244–272 is disordered; the sequence is APESQSEVIEAQGPVPQAEEEKQRDQSIQ. Mg(2+) contacts are provided by Asp520, Asp522, and Asp524.

This sequence belongs to the RNA polymerase beta' chain family. RpoC1 subfamily. As to quaternary structure, in plastids the minimal PEP RNA polymerase catalytic core is composed of four subunits: alpha, beta, beta', and beta''. When a (nuclear-encoded) sigma factor is associated with the core the holoenzyme is formed, which can initiate transcription. Mg(2+) is required as a cofactor. The cofactor is Zn(2+).

It is found in the plastid. Its subcellular location is the chloroplast. It carries out the reaction RNA(n) + a ribonucleoside 5'-triphosphate = RNA(n+1) + diphosphate. Its function is as follows. DNA-dependent RNA polymerase catalyzes the transcription of DNA into RNA using the four ribonucleoside triphosphates as substrates. The chain is DNA-directed RNA polymerase subunit beta' from Zygnema circumcarinatum (Green alga).